Here is a 1287-residue protein sequence, read N- to C-terminus: DNA-directed RNA polymerase subunit beta (1287 aa).

The protein belongs to the RNA polymerase beta chain family. The RNAP catalytic core consists of 2 alpha, 1 beta, 1 beta' and 1 omega subunit. When a sigma factor is associated with the core the holoenzyme is formed, which can initiate transcription.

It carries out the reaction RNA(n) + a ribonucleoside 5'-triphosphate = RNA(n+1) + diphosphate. In terms of biological role, DNA-dependent RNA polymerase catalyzes the transcription of DNA into RNA using the four ribonucleoside triphosphates as substrates. The chain is DNA-directed RNA polymerase subunit beta from Salinibacter ruber (strain DSM 13855 / M31).